A 257-amino-acid chain; its full sequence is MAPITEETVAGLKDTIGKLEARIEDLEGRLGQSKPKSVAEQMRIILMGPPGAGKGTQAPRIKEKYCVCHLATGDMLRSQVAKKTELGKEAKKIMDQGGLVSDEIMVNMIKSELENNAECKNGFILDGFPRTVAQAERLDDMLAARQQKLQHAIELQIDDALLVARITGRLVHPASGRSYHKIFNPPKQEMKDDITGEPLIQRSDDNAETLKKRLGTYHAQTAPVCDYYKKTGIWRGIDASQEPGQVWKSLLGVFQKN.

Gly51 to Thr56 contributes to the ATP binding site. Positions Ala71–Val100 are NMP. Residues Thr72, Arg77, Gly98 to Val100, Gly127 to Arg130, and Gln134 each bind AMP. The tract at residues Gly168 to Asp205 is LID. ATP-binding positions include Arg169 and Ser178–Tyr179. 2 residues coordinate AMP: Arg202 and Arg213. Gln241 is an ATP binding site.

The protein belongs to the adenylate kinase family. AK2 subfamily. As to quaternary structure, monomer.

Its subcellular location is the cytoplasm. The protein resides in the cytosol. It localises to the mitochondrion intermembrane space. The catalysed reaction is AMP + ATP = 2 ADP. Its function is as follows. Catalyzes the reversible transfer of the terminal phosphate group between ATP and AMP. Plays an important role in cellular energy homeostasis and in adenine nucleotide metabolism. Adenylate kinase activity is critical for regulation of the phosphate utilization and the AMP de novo biosynthesis pathways. In Aspergillus terreus (strain NIH 2624 / FGSC A1156), this protein is Adenylate kinase (adk1).